The sequence spans 378 residues: Succinyl-diaminopimelate desuccinylase (378 aa).

His-68 is a Zn(2+) binding site. Residue Asp-70 is part of the active site. Residue Asp-102 participates in Zn(2+) binding. Residue Glu-136 is the Proton acceptor of the active site. 3 residues coordinate Zn(2+): Glu-137, Glu-165, and His-351.

The protein belongs to the peptidase M20A family. DapE subfamily. Homodimer. The cofactor is Zn(2+). It depends on Co(2+) as a cofactor.

It catalyses the reaction N-succinyl-(2S,6S)-2,6-diaminopimelate + H2O = (2S,6S)-2,6-diaminopimelate + succinate. The protein operates within amino-acid biosynthesis; L-lysine biosynthesis via DAP pathway; LL-2,6-diaminopimelate from (S)-tetrahydrodipicolinate (succinylase route): step 3/3. Catalyzes the hydrolysis of N-succinyl-L,L-diaminopimelic acid (SDAP), forming succinate and LL-2,6-diaminopimelate (DAP), an intermediate involved in the bacterial biosynthesis of lysine and meso-diaminopimelic acid, an essential component of bacterial cell walls. The sequence is that of Succinyl-diaminopimelate desuccinylase from Pseudomonas syringae pv. syringae.